We begin with the raw amino-acid sequence, 430 residues long: Adenylosuccinate synthetase (430 aa).

GTP contacts are provided by residues 12-18 (GDEGKGK) and 40-42 (GHT). Aspartate 13 serves as the catalytic Proton acceptor. The Mg(2+) site is built by aspartate 13 and glycine 40. IMP is bound by residues 13 to 16 (DEGK), 38 to 41 (NAGH), threonine 128, arginine 142, glutamine 223, threonine 238, and arginine 302. Catalysis depends on histidine 41, which acts as the Proton donor. 298–304 (TTTGRPR) lines the substrate pocket. Residues arginine 304, 330-332 (SID), and 412-414 (SVG) contribute to the GTP site.

This sequence belongs to the adenylosuccinate synthetase family. Homodimer. Mg(2+) serves as cofactor.

It localises to the cytoplasm. The catalysed reaction is IMP + L-aspartate + GTP = N(6)-(1,2-dicarboxyethyl)-AMP + GDP + phosphate + 2 H(+). It functions in the pathway purine metabolism; AMP biosynthesis via de novo pathway; AMP from IMP: step 1/2. In terms of biological role, plays an important role in the de novo pathway of purine nucleotide biosynthesis. Catalyzes the first committed step in the biosynthesis of AMP from IMP. The sequence is that of Adenylosuccinate synthetase from Enterococcus faecalis (strain ATCC 700802 / V583).